Here is a 229-residue protein sequence, read N- to C-terminus: Ribonuclease 3 (229 aa).

In terms of domain architecture, RNase III spans 5–127 (LAGLERKLGY…LIGAIYLDAD (123 aa)). A Mg(2+)-binding site is contributed by E40. D44 is an active-site residue. The Mg(2+) site is built by D113 and E116. E116 is an active-site residue. The DRBM domain maps to 154-224 (DPKTRLQEFL…AASALIALGV (71 aa)).

It belongs to the ribonuclease III family. As to quaternary structure, homodimer. Requires Mg(2+) as cofactor.

It is found in the cytoplasm. It carries out the reaction Endonucleolytic cleavage to 5'-phosphomonoester.. Its function is as follows. Digests double-stranded RNA. Involved in the processing of primary rRNA transcript to yield the immediate precursors to the large and small rRNAs (23S and 16S). Processes some mRNAs, and tRNAs when they are encoded in the rRNA operon. Processes pre-crRNA and tracrRNA of type II CRISPR loci if present in the organism. The sequence is that of Ribonuclease 3 from Pseudomonas putida (strain ATCC 700007 / DSM 6899 / JCM 31910 / BCRC 17059 / LMG 24140 / F1).